The following is a 117-amino-acid chain: Ig heavy chain V region RF (117 aa).

A signal peptide spans 1–19 (MNFGLRLIFLVLVLKGVLC). The segment at 20-49 (DVKLVESGGGLVKLGGSLKLSCAASGFTFS) is framework-1. A disulfide bridge connects residues cysteine 41 and cysteine 115. Positions 50–54 (SYYMS) are complementarity-determining-1. A framework-2 region spans residues 55 to 68 (WVRQTPEKRLELVA). Residues 69-85 (AINSNGGSTYYPDTVKG) form a complementarity-determining-2 region. Residues 86–117 (RFTISRDNAKNTLYLQMSSLKSEDTALYYCAR) are framework-3.

This Mus musculus (Mouse) protein is Ig heavy chain V region RF.